A 280-amino-acid polypeptide reads, in one-letter code: MIQTLTDLSALRALVNGWKREGLRVALVPTMGNLHVGHYSLVMLARQYADRVVSSVFVNPTQFGPNEDFACYPRTPEADLRGLEDAGCDALWLPDVDTMYPLGTALATPIHAPGVSDVLEGECRPGHFDGVCTVVARLFNQVQPDVAAFGKKDYQQLAVIRQMVADLAFPIEILGGSIVREADGLAMSSRNQYLSAEERPTSANIHKVLLQMRDSYAVGTPRAQVEDAASHALEQAGFRVDYAVVRLPDLSEPGDGHTGAHVALIAARLGSTRLIDNLEF.

31–38 (MGNLHVGH) is a binding site for ATP. Catalysis depends on His38, which acts as the Proton donor. Gln62 contributes to the (R)-pantoate binding site. Gln62 contacts beta-alanine. 150 to 153 (GKKD) provides a ligand contact to ATP. Residue Gln156 coordinates (R)-pantoate. ATP is bound by residues Val179 and 187–190 (MSSR).

This sequence belongs to the pantothenate synthetase family. In terms of assembly, homodimer.

The protein resides in the cytoplasm. The catalysed reaction is (R)-pantoate + beta-alanine + ATP = (R)-pantothenate + AMP + diphosphate + H(+). The protein operates within cofactor biosynthesis; (R)-pantothenate biosynthesis; (R)-pantothenate from (R)-pantoate and beta-alanine: step 1/1. Catalyzes the condensation of pantoate with beta-alanine in an ATP-dependent reaction via a pantoyl-adenylate intermediate. In Xanthomonas oryzae pv. oryzae (strain MAFF 311018), this protein is Pantothenate synthetase.